We begin with the raw amino-acid sequence, 175 residues long: Translation initiation factor IF-3 (175 aa).

This sequence belongs to the IF-3 family. As to quaternary structure, monomer.

It is found in the cytoplasm. IF-3 binds to the 30S ribosomal subunit and shifts the equilibrium between 70S ribosomes and their 50S and 30S subunits in favor of the free subunits, thus enhancing the availability of 30S subunits on which protein synthesis initiation begins. The polypeptide is Translation initiation factor IF-3 (Staphylococcus carnosus (strain TM300)).